The sequence spans 363 residues: MMKRKILAAVIPALLAAATANAAEIYNKDGNKLDLYGKAVGRHVWTTTGDSKNADQTYAQIGFKGETQINTDLTGFGQWEYRTKADRAEGEQQNSNLVRLAFAGLKYAEVGSIDYGRNYGIVYDVESYTDMAPYFSGETWGGAYTDNYMTSRAGGLLTYRNSDFFGLVDGLSFGIQYQGKNQDNHSINSQNGDGVGYTMAYEFDGFGVTAAYSNSKRTNDQQDRDGNGDRAESWAVGAKYDANNVYLAAVYAETRNMSIVENTVTDTVEMANKTQNLEVVAQYQFDFGLRPAISYVQSKGKQLNGADGSADLAKYIQAGATYYFNKNMNVWVDYRFNLLDENDYSSSYVGTDDQAAVGITYQF.

A signal peptide spans 1–22 (MMKRKILAAVIPALLAAATANA). A beta stranded membrane pass occupies residues 23-28 (AEIYNK). Residue Asp29 is a topological domain, periplasmic. Residues 30-45 (GNKLDLYGKAVGRHVW) form a beta stranded membrane-spanning segment. At 46–56 (TTTGDSKNADQ) the chain is on the extracellular side. The beta stranded transmembrane segment at 57–69 (TYAQIGFKGETQI) threads the bilayer. The Periplasmic segment spans residues 70 to 71 (NT). Residues 72–84 (DLTGFGQWEYRTK) traverse the membrane as a beta stranded segment. Residues 85-99 (ADRAEGEQQNSNLVR) lie on the Extracellular side of the membrane. The chain crosses the membrane as a beta stranded span at residues 100 to 108 (LAFAGLKYA). Position 109 (Glu109) is a topological domain, periplasmic. A beta stranded membrane pass occupies residues 110–117 (VGSIDYGR). Residues 118 to 154 (NYGIVYDVESYTDMAPYFSGETWGGAYTDNYMTSRAG) lie on the Extracellular side of the membrane. A beta stranded membrane pass occupies residues 155–161 (GLLTYRN). At 162–169 (SDFFGLVD) the chain is on the periplasmic side. Residues 170-181 (GLSFGIQYQGKN) form a beta stranded membrane-spanning segment. Topologically, residues 182–192 (QDNHSINSQNG) are extracellular. The beta stranded transmembrane segment at 193-203 (DGVGYTMAYEF) threads the bilayer. Asp204 is a topological domain (periplasmic). Residues 205–217 (GFGVTAAYSNSKR) form a beta stranded membrane-spanning segment. Residues 218–230 (TNDQQDRDGNGDR) are Extracellular-facing. The beta stranded transmembrane segment at 231-242 (AESWAVGAKYDA) threads the bilayer. A topological domain (periplasmic) is located at residue Asn243. A beta stranded transmembrane segment spans residues 244–256 (NVYLAAVYAETRN). The Extracellular segment spans residues 257 to 272 (MSIVENTVTDTVEMAN). Residues 273-285 (KTQNLEVVAQYQF) form a beta stranded membrane-spanning segment. Residues 286 to 287 (DF) lie on the Periplasmic side of the membrane. A beta stranded membrane pass occupies residues 288-301 (GLRPAISYVQSKGK). Residues 302 to 312 (QLNGADGSADL) are Extracellular-facing. The beta stranded transmembrane segment at 313-324 (AKYIQAGATYYF) threads the bilayer. Topologically, residues 325–326 (NK) are periplasmic. The beta stranded transmembrane segment at 327-336 (NMNVWVDYRF) threads the bilayer. At 337–353 (NLLDENDYSSSYVGTDD) the chain is on the extracellular side. The beta stranded transmembrane segment at 354-363 (QAAVGITYQF) threads the bilayer.

It belongs to the Gram-negative porin family. In terms of assembly, homotrimer. Forms mixed heterotrimers with OmpC and with PhoE; other mixed heterotrimers with other porins are also probable.

The protein localises to the cell outer membrane. Forms pores that allow passive diffusion of small molecules across the outer membrane. This is Outer membrane porin F (ompF) from Salmonella typhi.